A 325-amino-acid polypeptide reads, in one-letter code: Thiamine-monophosphate kinase (325 aa).

The Mg(2+) site is built by Asp-30, Ser-45, Thr-46, and Asp-47. Position 54 (His-54) interacts with substrate. Residues Asp-75 and Asp-122 each contribute to the Mg(2+) site. ATP contacts are provided by residues 121–122 (GD) and Arg-146. Residue Asp-212 participates in Mg(2+) binding. Ser-214 contacts ATP. Asp-215 is a binding site for Mg(2+). Glu-263 and Tyr-319 together coordinate substrate.

It belongs to the thiamine-monophosphate kinase family.

The enzyme catalyses thiamine phosphate + ATP = thiamine diphosphate + ADP. Its pathway is cofactor biosynthesis; thiamine diphosphate biosynthesis; thiamine diphosphate from thiamine phosphate: step 1/1. Functionally, catalyzes the ATP-dependent phosphorylation of thiamine-monophosphate (TMP) to form thiamine-pyrophosphate (TPP), the active form of vitamin B1. The chain is Thiamine-monophosphate kinase (thiL) from Salmonella typhimurium (strain LT2 / SGSC1412 / ATCC 700720).